The sequence spans 125 residues: Protein ApaG (125 aa).

Positions Met-1–His-125 constitute an ApaG domain.

In Erwinia tasmaniensis (strain DSM 17950 / CFBP 7177 / CIP 109463 / NCPPB 4357 / Et1/99), this protein is Protein ApaG.